We begin with the raw amino-acid sequence, 349 residues long: MVAVRRRRTQASNPRSEPPQHMSDHDSDSDWDTVCEECSSGKQPAKLLLCDKCDKGFHLFCLRPILVSVPKGSWFCPSCSKHQIPKSFPLIQTKIIDFFRIKRSPDSSQISSSSDSIGKKRKKTSLVMSKKKRRLLPYNPSNDPQRRLEQMASLATALRASNTKFSNELTYVSGKAPRSANQAAFEKGGMQVLSKEGVETLALCKKMMDLGECPPLMVVFDPYEGFTVEADRFIKDWTIITEYVGDVDYLSNREDDYDGDSMMTLLHASDPSQCLVICPDRRSNIARFISGINNHSPEGRKKQNLKCVRFNINGEARVLLVANRDISKGERLYYDYNGYEHEYPTEHFV.

The segment at 1–28 (MVAVRRRRTQASNPRSEPPQHMSDHDSD) is disordered. The segment at 32–82 (DTVCEECSSGKQPAKLLLCDKCDKGFHLFCLRPILVSVPKGSWFCPSCSKH) adopts a PHD-type zinc-finger fold. The PIP motif signature appears at 92 to 99 (QTKIIDFF). The tract at residues 105-126 (PDSSQISSSSDSIGKKRKKTSL) is disordered. The span at 106 to 116 (DSSQISSSSDS) shows a compositional bias: low complexity. Met-190 serves as a coordination point for substrate. Positions 214-337 (PPLMVVFDPY…KGERLYYDYN (124 aa)) constitute an SET domain. Residues 224 to 226 (EGF) and 287 to 291 (RFISG) contribute to the S-adenosyl-L-methionine site. Residues Arg-309 and 339-340 (YE) each bind substrate. Tyr-343 and Val-349 together coordinate S-adenosyl-L-methionine.

It belongs to the class V-like SAM-binding methyltransferase superfamily. Histone-lysine methyltransferase family. TRX/MLL subfamily. Interacts with PCNA1 and PCNA2. Interacts (via PHD domain) with HTR1 (via N-terminus). Interacts with IPS1. As to expression, expressed in leaves, roots, stems, flowers and siliques. Up-regulated in tissues where cell division is active.

Its subcellular location is the nucleus. It catalyses the reaction L-lysyl(27)-[histone H3] + S-adenosyl-L-methionine = N(6)-methyl-L-lysyl(27)-[histone H3] + S-adenosyl-L-homocysteine + H(+). Histone methyltransferase that specifically monomethylates 'Lys-27' of histone H3 (H3K27me1). Has higher activity on nucleosomes containing H3.1 than H3.3. Involved in the formation of constitutive heterochromatin and the silencing of heterochromatic elements. May act as a positive regulator of the G1-S transition. Influences which sets of rRNA gene variants are expressed or silenced. Up-regulated by E2FB. This Arabidopsis thaliana (Mouse-ear cress) protein is Histone-lysine N-methyltransferase ATXR6 (ATXR6).